We begin with the raw amino-acid sequence, 738 residues long: MDPFFLNTQHVELLVSGKQSSPQDLLGIVSESLNQDRIVLFRPGAETVFVELRGKIQQAESHHSGIFSLPVMKGISPQDYRVYHQNGLLAHDPYAFPLLWGEIDSFLFHEGTHQRIYERMGAIPCEIDGVPGVRFIVWAPHAQRVSVIGDFNGWHGLVNPLHKVSDQGVWELFVPGLTAGACYKWEMVTESGQVLIKSDPYGKFFGPPPRSVSVVIDDSYEWNDSEWLEERIKKTEGPMNIYEVHVGSWQWQEGQPLNYKELADQLALYCKQMHYTHVELLPVTEHPLNESWGYQTTGYYAPTSRYGSFEDLQYFIDTMHQHGIGVILDWVPGHFPIDSFAMSGFDGTPLYEYTRNPSPLHPHWHTYTFDYAKPEVCNFLLGSALFWIDKMHVDGIRVDAVSSMLYLDYGRYAGEWVPNRYGGRENLDAIRFLQQFNTVIHEKYPGVLTFAEESTTFPKITVSVEEGGLGFDYKWNMGWMHDTLHYFEKDFPYRPYHQSDLTFPQWYAFSERFLLPFSHDEVVHGKRSLIGKMPGDAWRQFAQLRLLLGYQICQPGKKLLFMGGEFGQGREWSPGRELDWELLDISYHQGVHLCSQELNALYVQSPQLWQADHLPSSFRWVDFSDVRNGVVAYLRFADADAKKALLCVHHFGVGYFPHYLLPILPLESCDLLMNTDDTRFGGSGKGFREPEILTPEIARQEREAAGLIEADDESGPDCWGLDIELPPSATLIFSVTLQ.

The Nucleophile role is filled by aspartate 399. Glutamate 452 (proton donor) is an active-site residue.

It belongs to the glycosyl hydrolase 13 family. GlgB subfamily. In terms of assembly, monomer.

It carries out the reaction Transfers a segment of a (1-&gt;4)-alpha-D-glucan chain to a primary hydroxy group in a similar glucan chain.. It functions in the pathway glycan biosynthesis; glycogen biosynthesis. In terms of biological role, catalyzes the formation of the alpha-1,6-glucosidic linkages in glycogen by scission of a 1,4-alpha-linked oligosaccharide from growing alpha-1,4-glucan chains and the subsequent attachment of the oligosaccharide to the alpha-1,6 position. The polypeptide is 1,4-alpha-glucan branching enzyme GlgB (Chlamydia trachomatis serovar L2b (strain UCH-1/proctitis)).